Consider the following 412-residue polypeptide: Motilin receptor (412 aa).

Residues 1–35 are Extracellular-facing; that stretch reads MGSPWNGSDGPEGAREPPWPALPPCDERRCSPFPL. Asn-6 carries N-linked (GlcNAc...) asparagine glycosylation. A helical transmembrane segment spans residues 36–56; it reads GALVPVTAVCLCLFVVGVSGN. At 57 to 74 the chain is on the cytoplasmic side; sequence VVTVMLIGRYRDMRTTTN. The chain crosses the membrane as a helical span at residues 75-94; it reads LYLGSMAVSDLLILLGLPFD. Topologically, residues 95 to 112 are extracellular; sequence LYRLWRSRPWVFGPLLCR. An intrachain disulfide couples Cys-111 to Cys-235. A helical membrane pass occupies residues 113-134; it reads LSLYVGEGCTYATLLHMTALSV. At 135 to 157 the chain is on the cytoplasmic side; that stretch reads ERYLAICRPLRARVLVTRRRVRA. The chain crosses the membrane as a helical span at residues 158–178; it reads LIAVLWAVALLSAGPFLFLVG. Residues 179-246 lie on the Extracellular side of the membrane; the sequence is VEQDPGISVV…PSPAQLGALR (68 aa). A glycan (N-linked (GlcNAc...) asparagine) is linked at Asn-192. A helical transmembrane segment spans residues 247–270; it reads VMLWVTTAYFFLPFLCLSILYGLI. Residues 271 to 298 lie on the Cytoplasmic side of the membrane; sequence GRELWSSRRPLRGPAASGRERGHRQTVR. Residues 299-320 traverse the membrane as a helical segment; sequence VLLVVVLAFIICWLPFHVGRII. Topologically, residues 321–334 are extracellular; that stretch reads YINTEDSRMMYFSQ. Residues 335 to 358 form a helical membrane-spanning segment; sequence YFNIVALQLFYLSASINPILYNLI. The Cytoplasmic portion of the chain corresponds to 359–412; it reads SKKYRAAAFKLLLARKSRPRGFHRSRDTAGEVAGDTGGDTVGYTETSANVKTMG.

Belongs to the G-protein coupled receptor 1 family. As to expression, expressed only in thyroid, stomach, and bone marrow.

It localises to the cell membrane. Functionally, receptor for motilin. This is Motilin receptor (MLNR) from Homo sapiens (Human).